The chain runs to 184 residues: MQNLTDSFVSLGHWPSAGSFGFNTDILATNPINLSVVLGVLIFFGKGVLSDLLDNRKQRILSTIRNSEELRGGAIEQLEKARARLRKVEMEADEFRVNGYSEIEREKLNLINSTYKNLERLENYKNETIQFEQQRAINQVRQRVFQQALQRALGTLNSCLNNELHLRTISANIGMFGTMKEITD.

A helical transmembrane segment spans residues 27–49 (LATNPINLSVVLGVLIFFGKGVL).

This sequence belongs to the ATPase B chain family. F-type ATPases have 2 components, F(1) - the catalytic core - and F(0) - the membrane proton channel. F(1) has five subunits: alpha(3), beta(3), gamma(1), delta(1), epsilon(1). F(0) has four main subunits: a(1), b(1), b'(1) and c(10-14). The alpha and beta chains form an alternating ring which encloses part of the gamma chain. F(1) is attached to F(0) by a central stalk formed by the gamma and epsilon chains, while a peripheral stalk is formed by the delta, b and b' chains.

The protein resides in the plastid. It is found in the chloroplast thylakoid membrane. In terms of biological role, f(1)F(0) ATP synthase produces ATP from ADP in the presence of a proton or sodium gradient. F-type ATPases consist of two structural domains, F(1) containing the extramembraneous catalytic core and F(0) containing the membrane proton channel, linked together by a central stalk and a peripheral stalk. During catalysis, ATP synthesis in the catalytic domain of F(1) is coupled via a rotary mechanism of the central stalk subunits to proton translocation. Component of the F(0) channel, it forms part of the peripheral stalk, linking F(1) to F(0). This Platanus occidentalis (Sycamore) protein is ATP synthase subunit b, chloroplastic.